The sequence spans 270 residues: Fluoride-specific ion channel FluC 1 (270 aa).

The next 4 membrane-spanning stretches (helical) occupy residues Ile-4–Leu-24, Leu-35–Tyr-55, Ile-67–Val-87, and Ala-96–Leu-116. Positions 74 and 77 each coordinate Na(+).

Belongs to the fluoride channel Fluc/FEX (TC 1.A.43) family.

It is found in the cell inner membrane. It catalyses the reaction fluoride(in) = fluoride(out). With respect to regulation, na(+) is not transported, but it plays an essential structural role and its presence is essential for fluoride channel function. In terms of biological role, fluoride-specific ion channel. Important for reducing fluoride concentration in the cell, thus reducing its toxicity. This Brucella abortus biovar 1 (strain 9-941) protein is Fluoride-specific ion channel FluC 1.